The primary structure comprises 134 residues: Ribosome-binding factor A (134 aa).

It belongs to the RbfA family. Monomer. Binds 30S ribosomal subunits, but not 50S ribosomal subunits or 70S ribosomes.

It localises to the cytoplasm. One of several proteins that assist in the late maturation steps of the functional core of the 30S ribosomal subunit. Associates with free 30S ribosomal subunits (but not with 30S subunits that are part of 70S ribosomes or polysomes). Required for efficient processing of 16S rRNA. May interact with the 5'-terminal helix region of 16S rRNA. The chain is Ribosome-binding factor A from Parasynechococcus marenigrum (strain WH8102).